The chain runs to 507 residues: Ribosomal protein uS12 methylthiotransferase RimO (507 aa).

The MTTase N-terminal domain maps to 13-124; the sequence is RRVALLTLGC…ISDRLGAVLA (112 aa). [4Fe-4S] cluster contacts are provided by Cys22, Cys58, and Cys87. The interval 150-175 is disordered; sequence AAVSLPGHGTRAAAAGPGGRSAPVEV. Positions 155-172 are enriched in low complexity; the sequence is PGHGTRAAAAGPGGRSAP. In terms of domain architecture, Radical SAM core spans 191–422; that stretch reads LDTGPVASLK…ALADELCAQR (232 aa). [4Fe-4S] cluster-binding residues include Cys205, Cys209, and Cys212. The TRAM domain maps to 424 to 497; sequence EQRLGSTVQV…GVDLVAVPDG (74 aa).

This sequence belongs to the methylthiotransferase family. RimO subfamily. [4Fe-4S] cluster is required as a cofactor.

It localises to the cytoplasm. The catalysed reaction is L-aspartate(89)-[ribosomal protein uS12]-hydrogen + (sulfur carrier)-SH + AH2 + 2 S-adenosyl-L-methionine = 3-methylsulfanyl-L-aspartate(89)-[ribosomal protein uS12]-hydrogen + (sulfur carrier)-H + 5'-deoxyadenosine + L-methionine + A + S-adenosyl-L-homocysteine + 2 H(+). Its function is as follows. Catalyzes the methylthiolation of an aspartic acid residue of ribosomal protein uS12. The chain is Ribosomal protein uS12 methylthiotransferase RimO from Salinispora arenicola (strain CNS-205).